Reading from the N-terminus, the 113-residue chain is Protein PucD (113 aa).

Functionally, seems to be required for the LH-II stabilization. This chain is Protein PucD (pucD), found in Rhodobacter capsulatus (Rhodopseudomonas capsulata).